We begin with the raw amino-acid sequence, 448 residues long: ATP-dependent RNA helicase sub2 (448 aa).

Positions 19–29 (DAAATTAAPAA) are enriched in low complexity. The tract at residues 19 to 43 (DAAATTAAPAANGAQDKKGDLTVSG) is disordered. The Q motif signature appears at 58–86 (TGFRDFLLKGELLRAITDCGFEHPSEVQQ). The Helicase ATP-binding domain occupies 89–271 (IPTAILNVDV…KKFMRNPLEV (183 aa)). 102–109 (AKSGLGKT) is an ATP binding site. The short motif at 211 to 214 (DECD) is the DECD box element. Positions 283–444 (GLQQYYIKLS…EYPEGGVDSS (162 aa)) constitute a Helicase C-terminal domain.

It belongs to the DEAD box helicase family. DECD subfamily.

It localises to the nucleus. The catalysed reaction is ATP + H2O = ADP + phosphate + H(+). Functionally, ATP-binding RNA helicase involved in transcription elongation and required for the export of mRNA out of the nucleus. SUB2 also plays a role in pre-mRNA splicing and spliceosome assembly. May be involved in rDNA and telomeric silencing, and maintenance of genome integrity. This Aspergillus fumigatus (strain ATCC MYA-4609 / CBS 101355 / FGSC A1100 / Af293) (Neosartorya fumigata) protein is ATP-dependent RNA helicase sub2 (sub2).